Consider the following 211-residue polypeptide: MSHGHSHGGGGCRCAAEREEPPEQRGLAYGLYLRIDLERLQCLNESREGSGRGVFKPWEERTDRSKFVESDADEELLFNIPFTGNVKLKGIIIMGEDDDSHPSEMRLYKNIPQMSFDDTEREPDQTFSLNRDLTGELEYATKISRFSNVYHLSIHISKNFGADTTKVFYIGLRGEWTELRRHEVTICNYEASANPADHRVHQVTPQTHFIS.

Residues 20–192 (EPPEQRGLAY…EVTICNYEAS (173 aa)) form the PITH domain. Phosphotyrosine is present on Tyr189.

This sequence belongs to the PITHD1 family. In terms of tissue distribution, down-regulated in primary acute myeloid leukemia (AML) patients.

The protein localises to the cytoplasm. Its function is as follows. Promotes megakaryocyte differentiation by up-regulating RUNX1 expression. Regulates RUNX1 expression by activating the proximal promoter of the RUNX1 gene and by enhancing the translation activity of an internal ribosome entry site (IRES) element in the RUNX1 gene. In Homo sapiens (Human), this protein is PITH domain-containing protein 1 (PITHD1).